The sequence spans 299 residues: dTDP-4-dehydrorhamnose reductase (299 aa).

NADH-binding positions include 10 to 12 (GQV), aspartate 30, 39 to 40 (DF), and 63 to 65 (AHT). 11–12 (QV) is a binding site for NADPH. Residues 39–40 (DF), 63–65 (AHT), and tyrosine 102 contribute to the NADPH site. 104-105 (TD) lines the dTDP-beta-L-rhamnose pocket. Residues tyrosine 128 and lysine 132 each coordinate NADH. Residues tyrosine 128 and lysine 132 each contribute to the NADPH site. Catalysis depends on tyrosine 128, which acts as the Proton donor/acceptor. Tryptophan 153 contacts dTDP-beta-L-rhamnose.

This sequence belongs to the dTDP-4-dehydrorhamnose reductase family. In terms of assembly, homodimer. It depends on Mg(2+) as a cofactor.

The enzyme catalyses dTDP-beta-L-rhamnose + NADP(+) = dTDP-4-dehydro-beta-L-rhamnose + NADPH + H(+). It functions in the pathway carbohydrate biosynthesis; dTDP-L-rhamnose biosynthesis. Its pathway is bacterial outer membrane biogenesis; LPS O-antigen biosynthesis. In terms of biological role, involved in the biosynthesis of the dTDP-L-rhamnose which is an important component of lipopolysaccharide (LPS). Catalyzes the reduction of dTDP-6-deoxy-L-lyxo-4-hexulose to yield dTDP-L-rhamnose. RmlD uses NADH and NADPH nearly equally well. The protein is dTDP-4-dehydrorhamnose reductase of Escherichia coli (strain K12).